A 132-amino-acid chain; its full sequence is Small ribosomal subunit protein uS8 (132 aa).

It belongs to the universal ribosomal protein uS8 family. In terms of assembly, part of the 30S ribosomal subunit. Contacts proteins S5 and S12.

In terms of biological role, one of the primary rRNA binding proteins, it binds directly to 16S rRNA central domain where it helps coordinate assembly of the platform of the 30S subunit. The protein is Small ribosomal subunit protein uS8 of Rhodopseudomonas palustris (strain BisB18).